The primary structure comprises 155 residues: MPGVTVKEIDQHVLTKNMAAFLKKSGKIFVPEQAVYMKTGKFKETAPTDDDWFYTRCASIMRHLYLRSPAGVGAFTKVYSGRKRNGVRPSKHCRSSDGCIRKALQALEAANMVERHPDGGRKLTPQGQRNLDRIANKIVAKQRERSAPVSMIITT.

Belongs to the eukaryotic ribosomal protein eS19 family.

This Drosophila melanogaster (Fruit fly) protein is Small ribosomal subunit protein eS19B (RpS19b).